We begin with the raw amino-acid sequence, 734 residues long: ATP-dependent RNA helicase DDX50 (734 aa).

A disordered region spans residues 1–131 (MPGKLLWGDI…KAEETLTREQ (131 aa)). A compositionally biased stretch (acidic residues) spans 11–20 (MELEAPLEES). 2 stretches are compositionally biased toward basic and acidic residues: residues 38–51 (HSES…RENG) and 67–86 (REKL…EFSP). Phosphoserine is present on residues serine 41, serine 81, serine 85, serine 113, serine 119, and serine 120. Basic and acidic residues predominate over residues 115-131 (NSHKSSDKAEETLTREQ). Residue lysine 122 forms a Glycyl lysine isopeptide (Lys-Gly) (interchain with G-Cter in SUMO2) linkage. The Q motif motif lies at 134–162 (GAFSNFSISEETIKLLKGRGVTYLFPIQV). A Helicase ATP-binding domain is found at 165–344 (FGPVYEGKDL…KKYMKSRYEQ (180 aa)). 178–185 (ARTGTGKT) is a binding site for ATP. Threonine 244 carries the phosphothreonine modification. A DEVD box motif is present at residues 287 to 290 (DEVD). In terms of domain architecture, Helicase C-terminal spans 377–521 (DVLQVYSGSE…GVPSTMDLVK (145 aa)). Serine 515 is modified (phosphoserine). The disordered stretch occupies residues 664 to 734 (YYDGNTSSNP…RSGGHKRNFD (71 aa)). Over residues 679-698 (WSGGRSGRSGRSGGRSGGRS) the composition is skewed to gly residues. The span at 699–709 (GRQSRQGSRSG) shows a compositional bias: low complexity. Over residues 717–734 (RSGNRNRSRSGGHKRNFD) the composition is skewed to basic residues.

This sequence belongs to the DEAD box helicase family. DDX21/DDX50 subfamily. In terms of assembly, interacts with C1QBP. Interacts with the ubiquitin ligase CTLH complex through GID4. Interacts with TICAM1.

The protein localises to the nucleus. It is found in the nucleolus. It localises to the cytoplasm. The catalysed reaction is ATP + H2O = ADP + phosphate + H(+). ATP-dependent RNA helicase that may play a role in various aspects of RNA metabolism including pre-mRNA splicing or ribosomal RNA production. Also acts as a viral restriction factor and promotes the activation of the NF-kappa-B and IRF3 signaling pathways following its stimulation with viral RNA or infection with RNA and DNA viruses. For instance, decreases vaccinia virus, herpes simplex virus, Zika virus or dengue virus replication during the early stage of infection. Mechanistically, acts via the adapter TICAM1 and independently of the DDX1-DDX21-DHX36 helicase complex to induce the production of interferon-beta. The chain is ATP-dependent RNA helicase DDX50 (Ddx50) from Mus musculus (Mouse).